The sequence spans 73 residues: Mu-conotoxin PIIIA (73 aa).

A signal peptide spans 1–19 (MSKLGVLLTICLLLFPITA). The propeptide occupies 20-49 (LPMDGDQPADRLAERMQDNISSEEHPFEKR). Gln-50 carries the post-translational modification Pyrrolidone carboxylic acid. 6 disulfides stabilise this stretch: Cys-53-Cys-65, Cys-53-Cys-70, Cys-54-Cys-70, Cys-54-Cys-71, Cys-60-Cys-65, and Cys-60-Cys-71. Position 57 is a 4-hydroxyproline (Pro-57). Pro-67 carries the post-translational modification 4-hydroxyproline. Cys-71 bears the Cysteine amide mark.

This sequence belongs to the conotoxin M superfamily. In terms of processing, 3D-structure of 3 disulfide-bond connectivities isomers is described (PIIIA-1 (C1-C5, C2-C6, C3-C4), PIIIA-2 (C1-C4, C2-C5, C3-C6) and PIIIA-3 (C1-C2, C3-C4, C5-C6)). Only PIIIA-2 contains the cysteine connectivity described as typical for native mu-conotoxins. However, PIIIA-1 is more potent than PIIIA-2, suggesting another possible disulfid connectivity. For this reason, both connectivities have been indicated in features. As to expression, expressed by the venom duct.

It localises to the secreted. Its function is as follows. Mu-conotoxins block voltage-gated sodium channels (Nav). This toxin potently blocks rNav1.4/SCN4A (IC(50)=36-41 nM). It also moderately blocks rNav1.1/SCN1A (IC(50)=120 nM), rNav1.2/SCN2A (IC(50)=620 nM), rNav1.3/SCN3A (IC(50)=3.2 uM), mNav1.6/SCN8A (IC(50)=100 nM). This inhibition is reversible. The block of Nav1.1, Nav1.2, and Nav1.6 is modified when beta-subunits are coexpressed with alpha subunits. Hence, blocks of channels containing the beta-1 and beta-3 subunits are more potent (compared to channels without beta subunits), whereas blocks of channels containing the beta-2 and beta-4 are less potent (compared to channels without beta subunits). In vivo, this peptide causes flaccid paralysis in both mice and fish. This Conus purpurascens (Purple cone) protein is Mu-conotoxin PIIIA.